We begin with the raw amino-acid sequence, 234 residues long: Golgi SNAP receptor complex member 1 (234 aa).

The Cytoplasmic segment spans residues 1–212 (MSETWEALRK…MQKIKTKKQK (212 aa)). A coiled-coil region spans residues 54–121 (VTTEIEGLIE…RDNVDQVLQR (68 aa)). The chain crosses the membrane as a helical; Anchor for type IV membrane protein span at residues 213–233 (NTLILAAVISSCLIFTIFWII). Position 234 (Asn234) is a topological domain, vesicular.

The protein belongs to the GOSR1 family. Component of several multiprotein Golgi SNARE complexes.

The protein resides in the golgi apparatus membrane. In terms of biological role, involved in transport from the ER to the Golgi apparatus as well as in intra-Golgi transport. It belongs to a super-family of proteins called t-SNAREs or soluble NSF (N-ethylmaleimide-sensitive factor) attachment protein receptor. Cooperates with ykt-6 for proper expression of Golgi-resident proteins. Required along with ykt-6 for normal embryonic development, seam cell division or differentiation, and ray formation. This is Golgi SNAP receptor complex member 1 (gos-28) from Caenorhabditis elegans.